Consider the following 378-residue polypeptide: Chaperone protein DnaJ (378 aa).

Residues 5–72 (DFYEVLGVPK…QKRAAYDQFG (68 aa)) form the J domain. A CR-type zinc finger spans residues 138–216 (GKEAQIRIPS…CHGQGKVKKQ (79 aa)). Cys151, Cys154, Cys168, Cys171, Cys190, Cys193, Cys204, and Cys207 together coordinate Zn(2+). 4 CXXCXGXG motif repeats span residues 151–158 (CETCHGSG), 168–175 (CTTCSGTG), 190–197 (CPHCRGTG), and 204–211 (CVTCHGQG). The tract at residues 354–378 (SLKKGGGKHSPSGESWTDRLKNLFT) is disordered. Residues 369–378 (WTDRLKNLFT) are compositionally biased toward basic and acidic residues.

The protein belongs to the DnaJ family. As to quaternary structure, homodimer. It depends on Zn(2+) as a cofactor.

It localises to the cytoplasm. In terms of biological role, participates actively in the response to hyperosmotic and heat shock by preventing the aggregation of stress-denatured proteins and by disaggregating proteins, also in an autonomous, DnaK-independent fashion. Unfolded proteins bind initially to DnaJ; upon interaction with the DnaJ-bound protein, DnaK hydrolyzes its bound ATP, resulting in the formation of a stable complex. GrpE releases ADP from DnaK; ATP binding to DnaK triggers the release of the substrate protein, thus completing the reaction cycle. Several rounds of ATP-dependent interactions between DnaJ, DnaK and GrpE are required for fully efficient folding. Also involved, together with DnaK and GrpE, in the DNA replication of plasmids through activation of initiation proteins. The sequence is that of Chaperone protein DnaJ from Paracidovorax citrulli (strain AAC00-1) (Acidovorax citrulli).